A 383-amino-acid chain; its full sequence is Fructose-1,6-bisphosphate aldolase/phosphatase (383 aa).

D11 (proton acceptor; for FBP phosphatase activity) is an active-site residue. Mg(2+) contacts are provided by D11, H18, D52, and D53. H18 lines the beta-D-fructose 1,6-bisphosphate pocket. H18 is a dihydroxyacetone phosphate binding site. Y90 contacts beta-D-fructose 1,6-bisphosphate. Q94 serves as a coordination point for Mg(2+). 103 to 104 provides a ligand contact to beta-D-fructose 1,6-bisphosphate; the sequence is GN. Position 131 (D131) interacts with Mg(2+). Residue K132 coordinates beta-D-fructose 1,6-bisphosphate. Residue K132 participates in dihydroxyacetone phosphate binding. Y228 (proton donor/acceptor; for FBP aldolase activity) is an active-site residue. Positions 231, 232, and 233 each coordinate Mg(2+). K231 acts as the Schiff-base intermediate with DHAP; for FBP aldolase activity in catalysis. Beta-D-fructose 1,6-bisphosphate-binding positions include 241–242, R265, D286, and Y347; that span reads QH. Dihydroxyacetone phosphate is bound by residues R265 and D286. Positions 361-383 are disordered; that stretch reads FKKEEDVKKAKPSVYTSKDQGMD. Over residues 374 to 383 the composition is skewed to polar residues; the sequence is VYTSKDQGMD.

The protein belongs to the FBP aldolase/phosphatase family. Homooctamer; dimer of tetramers. Mg(2+) is required as a cofactor.

It catalyses the reaction beta-D-fructose 1,6-bisphosphate + H2O = beta-D-fructose 6-phosphate + phosphate. The catalysed reaction is beta-D-fructose 1,6-bisphosphate = D-glyceraldehyde 3-phosphate + dihydroxyacetone phosphate. Its pathway is carbohydrate biosynthesis; gluconeogenesis. Functionally, catalyzes two subsequent steps in gluconeogenesis: the aldol condensation of dihydroxyacetone phosphate (DHAP) and glyceraldehyde-3-phosphate (GA3P) to fructose-1,6-bisphosphate (FBP), and the dephosphorylation of FBP to fructose-6-phosphate (F6P). The chain is Fructose-1,6-bisphosphate aldolase/phosphatase from Metallosphaera sedula (strain ATCC 51363 / DSM 5348 / JCM 9185 / NBRC 15509 / TH2).